The sequence spans 1468 residues: Centrosomal protein of 290 kDa (1468 aa).

7 coiled-coil regions span residues 1–25 (ERQL…VGEK), 52–121 (SLSE…IEQA), 172–292 (KMYE…DEKA), 318–528 (VASK…EAQK), 559–592 (RIIL…ILSR), 627–688 (HTLK…QADN), and 736–1441 (IKLK…SEQF). Residues 1060–1468 (TTGLTVDQVM…QENPVNFPIY (409 aa)) form a self-association (with itself or N-terminus) region. Residues 1130–1152 (LSKDAYSRPSTSGIDSDDHYQRE) form a disordered region.

In terms of assembly, part of the tectonic-like complex (also named B9 complex). Interacts with ATF4 via its N-terminal region. Associates with the BBSome complex, interacting (via N-terminus) with BBS4. Interacts with IQCB1/NPHP5; IQCB1 and CEP290/NPHP6 are proposed to form a functional NPHP5-6 module localized to the centrosome. Interacts with NPHP4; the interaction likely requires additional interactors. Interacts with ZNF423, FAM161A, CEP162, CEP162, CEP131, TALPID3, CCDC13, CC2D2A, RPGRIP1. Can self-associate (homo- or heteromeric). Interacts with CCP110; required for suppressing cilia formation. Interacts with RPGR. Associates (via C-terminus) with microtubules; association to microtubule is reduced in response to cellular stress, such as ultraviolet light (UV) radiation or heat shock, in a process that requires p38 MAP kinase signaling. Interacts with FAM161A. Interacts with PCM1. Interacts with CCDC66. Interacts with ARMC9 and CSPP1. Ubiquitinated. May undergo monoubiquitination; monoubiquitination is inhibited in response to cellular stress, such as ultraviolet light (UV) radiation or heat shock, but does not cause its displacement from centriolar satellites.

The protein localises to the cytoplasm. The protein resides in the cytoskeleton. It localises to the microtubule organizing center. Its subcellular location is the centrosome. It is found in the centriolar satellite. The protein localises to the nucleus. The protein resides in the cell projection. It localises to the cilium. Its subcellular location is the cilium basal body. It is found in the centriole. The protein localises to the cytoplasmic vesicle. Its function is as follows. Involved in early and late steps in cilia formation. Its association with CCP110 is required for inhibition of primary cilia formation by CCP110. May play a role in early ciliogenesis in the disappearance of centriolar satellites and in the transition of primary ciliar vesicles (PCVs) to capped ciliary vesicles (CCVs). Required for the centrosomal recruitment of RAB8A and for the targeting of centriole satellite proteins to centrosomes such as of PCM1. Required for the correct localization of ciliary and phototransduction proteins in retinal photoreceptor cells; may play a role in ciliary transport processes. Required for efficient recruitment of RAB8A to primary cilium. In the ciliary transition zone is part of the tectonic-like complex which is required for tissue-specific ciliogenesis and may regulate ciliary membrane composition. Involved in regulation of the BBSome complex integrity, specifically for presence of BBS2, BBS5 and BBS8/TTC8 in the complex, and in ciliary targeting of selected BBSome cargos. May play a role in controlling entry of the BBSome complex to cilia possibly implicating IQCB1/NPHP5. Activates ATF4-mediated transcription. This Bos taurus (Bovine) protein is Centrosomal protein of 290 kDa (CEP290).